The chain runs to 225 residues: NAD(P)H-quinone oxidoreductase subunit K, chloroplastic (225 aa).

[4Fe-4S] cluster is bound by residues Cys43, Cys44, Cys108, and Cys139.

This sequence belongs to the complex I 20 kDa subunit family. In terms of assembly, NDH is composed of at least 16 different subunits, 5 of which are encoded in the nucleus. It depends on [4Fe-4S] cluster as a cofactor.

The protein localises to the plastid. It is found in the chloroplast thylakoid membrane. The catalysed reaction is a plastoquinone + NADH + (n+1) H(+)(in) = a plastoquinol + NAD(+) + n H(+)(out). It carries out the reaction a plastoquinone + NADPH + (n+1) H(+)(in) = a plastoquinol + NADP(+) + n H(+)(out). In terms of biological role, NDH shuttles electrons from NAD(P)H:plastoquinone, via FMN and iron-sulfur (Fe-S) centers, to quinones in the photosynthetic chain and possibly in a chloroplast respiratory chain. The immediate electron acceptor for the enzyme in this species is believed to be plastoquinone. Couples the redox reaction to proton translocation, and thus conserves the redox energy in a proton gradient. In Solanum bulbocastanum (Wild potato), this protein is NAD(P)H-quinone oxidoreductase subunit K, chloroplastic.